The following is a 332-amino-acid chain: MKQVQTKRDWKKLAYDVVEEKMITKEDAIAILEADDTEVLEIMNAAYIIRHHYFGKKVKLNMIINTKSGLCPEDCGYCSQSIISEAPIDKYAWLTQEKIVEGAHEAIRRKAGTYCIVASGRRPTDKEVNHVIGAVKEIRETTDLKICCCLGFLNEDQAGRLAEAGVHRYNHNLNTHANNYESICSTHTYDDRVDTVQKAKQAGISPCSGAIFGMGETIEERAEIAFELQRIDADSIPCNFLVAVKGTPLEGQKELTPVECLKVLAMMRFVNPTKEIRISGGREINLRSVQPIGLFAANSIFVGDYLTTAGQEPTADWGMIEDLGFEIEECAL.

Residues 53-282 (YFGKKVKLNM…TKEIRISGGR (230 aa)) enclose the Radical SAM core domain. The [4Fe-4S] cluster site is built by cysteine 71, cysteine 75, and cysteine 78. [2Fe-2S] cluster contacts are provided by cysteine 115, cysteine 147, cysteine 207, and arginine 277.

This sequence belongs to the radical SAM superfamily. Biotin synthase family. As to quaternary structure, homodimer. [4Fe-4S] cluster is required as a cofactor. [2Fe-2S] cluster serves as cofactor.

The enzyme catalyses (4R,5S)-dethiobiotin + (sulfur carrier)-SH + 2 reduced [2Fe-2S]-[ferredoxin] + 2 S-adenosyl-L-methionine = (sulfur carrier)-H + biotin + 2 5'-deoxyadenosine + 2 L-methionine + 2 oxidized [2Fe-2S]-[ferredoxin]. The protein operates within cofactor biosynthesis; biotin biosynthesis; biotin from 7,8-diaminononanoate: step 2/2. In terms of biological role, catalyzes the conversion of dethiobiotin (DTB) to biotin by the insertion of a sulfur atom into dethiobiotin via a radical-based mechanism. The sequence is that of Biotin synthase from Bacillus anthracis.